Consider the following 60-residue polypeptide: Large ribosomal subunit protein bL32 (60 aa).

The interval Met-1–Lys-21 is disordered. Basic residues predominate over residues His-7 to Tyr-20.

It belongs to the bacterial ribosomal protein bL32 family.

The chain is Large ribosomal subunit protein bL32 from Streptococcus thermophilus (strain ATCC BAA-250 / LMG 18311).